The following is a 231-amino-acid chain: E3 ubiquitin-protein ligase At3g02290 (231 aa).

Basic and acidic residues predominate over residues Gly-103–Ser-118. Residues Gly-103 to Phe-125 are disordered. An RING-type; atypical zinc finger spans residues Cys-181–Gly-222.

It is found in the cytoplasm. The enzyme catalyses S-ubiquitinyl-[E2 ubiquitin-conjugating enzyme]-L-cysteine + [acceptor protein]-L-lysine = [E2 ubiquitin-conjugating enzyme]-L-cysteine + N(6)-ubiquitinyl-[acceptor protein]-L-lysine.. The protein operates within protein modification; protein ubiquitination. Mediates E2-dependent protein ubiquitination. This Arabidopsis thaliana (Mouse-ear cress) protein is E3 ubiquitin-protein ligase At3g02290.